We begin with the raw amino-acid sequence, 616 residues long: METVDTSQRLARLRELMKERNVDVYLVPSEDSHQSEYIAPCDGRREFISGFSGSAGCAIVSMTKAALSTDGRYFNQASKQLDNNWLLLKRGIESMPTWQEWTAEQLEGGKVVGVDPSLITASDARSLSETIKKSGGSLLGVQENLVDLVWGKDRPCRPSEKVTVHPVEFAGKSFEEKITDLRKELEKKKSAGFVVSMLDEVAWLFNLRGNDIPYNPVFFSYAIITPSTADLYIDEEKLSADVKKHLGDKVSLKPYTSIFEDAKALGQSAQAEVNGGASDPPRKFFISTKASWSLSLALGGANKVEEVRSPISDAKAIKNDTELEGMRACHIRDGAALTKYFAWLENELVNKKTVLNEVEASDKLEEIRSKQKNFVGLSFDTISSSGPNAAVVHYKAERKNCSIIDPEAVYLCDSGAQYLDGTTDTTRTLHFGEPTEKERKAYTLVLKGMIAIDTAIFPKGTTGFSLDTLARQFLWKEGLDYLHGTGHGVGSYLNVHEGPIGIGTRVQYSETPLSVGNVISDEPGYYEDGKFGIRIENIIMAREVKTTFSFGERPWLGFEHVTMTPLCRKLIDPSLLNDAEKKWINEYHSEVWEKTSGYFAEDELTRNWLKRETQPI.

Mn(2+) contacts are provided by aspartate 413, aspartate 424, glutamate 522, and glutamate 536.

It belongs to the peptidase M24B family. It depends on Mn(2+) as a cofactor.

It catalyses the reaction Release of any N-terminal amino acid, including proline, that is linked to proline, even from a dipeptide or tripeptide.. Catalyzes the removal of a penultimate prolyl residue from the N-termini of peptides. This Paracoccidioides brasiliensis (strain Pb03) protein is Probable Xaa-Pro aminopeptidase P (AMPP).